Consider the following 388-residue polypeptide: Succinate--CoA ligase [ADP-forming] subunit beta (388 aa).

An ATP-grasp domain is found at Lys9–Glu244. ATP-binding positions include Lys46, Gly53 to Gly55, Glu99, Ala102, and Glu107. Mg(2+)-binding residues include Asn199 and Asp213. Residues Asn264 and Gly321–Met323 contribute to the substrate site.

This sequence belongs to the succinate/malate CoA ligase beta subunit family. As to quaternary structure, heterotetramer of two alpha and two beta subunits. The cofactor is Mg(2+).

The enzyme catalyses succinate + ATP + CoA = succinyl-CoA + ADP + phosphate. It carries out the reaction GTP + succinate + CoA = succinyl-CoA + GDP + phosphate. It functions in the pathway carbohydrate metabolism; tricarboxylic acid cycle; succinate from succinyl-CoA (ligase route): step 1/1. Its function is as follows. Succinyl-CoA synthetase functions in the citric acid cycle (TCA), coupling the hydrolysis of succinyl-CoA to the synthesis of either ATP or GTP and thus represents the only step of substrate-level phosphorylation in the TCA. The beta subunit provides nucleotide specificity of the enzyme and binds the substrate succinate, while the binding sites for coenzyme A and phosphate are found in the alpha subunit. The polypeptide is Succinate--CoA ligase [ADP-forming] subunit beta (Burkholderia lata (strain ATCC 17760 / DSM 23089 / LMG 22485 / NCIMB 9086 / R18194 / 383)).